The primary structure comprises 342 residues: Protein FinQ (342 aa).

Positions 208-227 (RDREFNLLNAQISMVLYICS) form a DNA-binding region, H-T-H motif.

Transcriptional inhibitor of the F plasmid transfer genes. FinQ may regulate a gene or genes encoded on the IncI plasmids, and coincidentally may inhibit F transfer when coresident. In Escherichia coli, this protein is Protein FinQ (finQ).